A 144-amino-acid polypeptide reads, in one-letter code: Ninjurin-2 (144 aa).

The Extracellular segment spans residues 1–62 (MESDREIIHL…KSVLEQGPFS (62 aa)). The segment at 27–39 (NHYATKKSVAESM) is helix alpha1. The helix alpha2 stretch occupies residues 40 to 59 (LDVALFMSNAMRLKSVLEQG). Residues 63–94 (QYYTTLLTLISASLLLQVVIGILLVVIARLNL) traverse the membrane as a helical segment. At 95-98 (NEVE) the chain is on the cytoplasmic side. The chain crosses the membrane as a helical span at residues 99-128 (NQWRLNQLNNAATTLVFITVVINIFITAFG). Q105 contacts cholesterol. Residues 129 to 144 (AHKTGSVAARTSSNPI) are Extracellular-facing.

The protein belongs to the ninjurin family. As to quaternary structure, homooligomer; in response to stimuli, homooligomerizes into filaments. In contrast to NINJ1, the filament is curved toward the intracellular space, preventing its circularization on a relatively flat membrane to mediate plasma membrane rupture: curvature is caused by cholesterol-binding at the cytoplasmic leaflet.

It is found in the cell membrane. Its role in unclear. In contrast to NINJ1 paralog, does not mediate plasma membrane rupture (cytolysis) downstream of necroptotic and pyroptotic programmed cell death. While it is able to oligomerize and form filaments, filaments are curved toward the intracellular space, preventing circularization to mediate plasma membrane rupture. May act as a homophilic transmembrane adhesion molecule involved in nerve regeneration. Promotes axonal growth. In Rattus norvegicus (Rat), this protein is Ninjurin-2 (Ninj2).